The sequence spans 121 residues: Class I hydrophobin 2 (121 aa).

The first 18 residues, 1 to 18, serve as a signal peptide directing secretion; that stretch reads MQFTTIVMTLAAAVAVTA. Disulfide bonds link C52-C101, C60-C94, C61-C79, and C102-C116. N83 carries N-linked (GlcNAc...) asparagine glycosylation.

Belongs to the fungal hydrophobin family. As to quaternary structure, self-assembles to form functional amyloid fibrils called rodlets. Self-assembly into fibrillar rodlets occurs spontaneously at hydrophobic:hydrophilic interfaces and the rodlets further associate laterally to form amphipathic monolayers. Expressed in conidia and aerial hyphae.

It localises to the secreted. Its subcellular location is the cell wall. In terms of biological role, aerial growth, conidiation, and dispersal of filamentous fungi in the environment rely upon a capability of their secreting small amphipathic proteins called hydrophobins (HPBs) with low sequence identity. Class I can self-assemble into an outermost layer of rodlet bundles on aerial cell surfaces, conferring cellular hydrophobicity that supports fungal growth, development and dispersal; whereas Class II form highly ordered films at water-air interfaces through intermolecular interactions but contribute nothing to the rodlet structure. Hcf-2 is a class I hydrophobin that is not necessary for the development of hyphae or conidia but contributes to cell surface hydrophobicity. The sequence is that of Class I hydrophobin 2 from Passalora fulva (Tomato leaf mold).